The primary structure comprises 305 residues: Recombination-associated protein RdgC (305 aa).

This sequence belongs to the RdgC family.

It is found in the cytoplasm. It localises to the nucleoid. In terms of biological role, may be involved in recombination. In Sodalis glossinidius (strain morsitans), this protein is Recombination-associated protein RdgC.